Consider the following 224-residue polypeptide: Deoxyribose-phosphate aldolase (224 aa).

D92 functions as the Proton donor/acceptor in the catalytic mechanism. Residue K155 is the Schiff-base intermediate with acetaldehyde of the active site. The Proton donor/acceptor role is filled by K184.

The protein belongs to the DeoC/FbaB aldolase family. DeoC type 1 subfamily.

It is found in the cytoplasm. The enzyme catalyses 2-deoxy-D-ribose 5-phosphate = D-glyceraldehyde 3-phosphate + acetaldehyde. It functions in the pathway carbohydrate degradation; 2-deoxy-D-ribose 1-phosphate degradation; D-glyceraldehyde 3-phosphate and acetaldehyde from 2-deoxy-alpha-D-ribose 1-phosphate: step 2/2. Its function is as follows. Catalyzes a reversible aldol reaction between acetaldehyde and D-glyceraldehyde 3-phosphate to generate 2-deoxy-D-ribose 5-phosphate. In Halalkalibacterium halodurans (strain ATCC BAA-125 / DSM 18197 / FERM 7344 / JCM 9153 / C-125) (Bacillus halodurans), this protein is Deoxyribose-phosphate aldolase.